The chain runs to 518 residues: Probable lysine--tRNA ligase, cytoplasmic (518 aa).

This sequence belongs to the class-II aminoacyl-tRNA synthetase family. As to quaternary structure, homodimer.

It localises to the cytoplasm. It catalyses the reaction tRNA(Lys) + L-lysine + ATP = L-lysyl-tRNA(Lys) + AMP + diphosphate. The chain is Probable lysine--tRNA ligase, cytoplasmic from Enterocytozoon bieneusi (strain H348) (Microsporidian parasite).